Consider the following 152-residue polypeptide: Ribosomal RNA large subunit methyltransferase H (152 aa).

Residues Leu-68, Gly-100, and 119 to 124 each bind S-adenosyl-L-methionine; that span reads FGPMTW.

This sequence belongs to the RNA methyltransferase RlmH family. In terms of assembly, homodimer.

It is found in the cytoplasm. The catalysed reaction is pseudouridine(1915) in 23S rRNA + S-adenosyl-L-methionine = N(3)-methylpseudouridine(1915) in 23S rRNA + S-adenosyl-L-homocysteine + H(+). In terms of biological role, specifically methylates the pseudouridine at position 1915 (m3Psi1915) in 23S rRNA. This is Ribosomal RNA large subunit methyltransferase H from Rhodospirillum centenum (strain ATCC 51521 / SW).